Reading from the N-terminus, the 208-residue chain is Small ribosomal subunit protein uS4 (208 aa).

Residues 30-49 (KSALEKRPYPPGQHGQRRSK) are disordered. The region spanning 98–161 (RRLDNVVYRM…KNNPQIQRSL (64 aa)) is the S4 RNA-binding domain.

The protein belongs to the universal ribosomal protein uS4 family. Part of the 30S ribosomal subunit. Contacts protein S5. The interaction surface between S4 and S5 is involved in control of translational fidelity.

One of the primary rRNA binding proteins, it binds directly to 16S rRNA where it nucleates assembly of the body of the 30S subunit. Functionally, with S5 and S12 plays an important role in translational accuracy. The protein is Small ribosomal subunit protein uS4 of Nitratiruptor sp. (strain SB155-2).